A 410-amino-acid polypeptide reads, in one-letter code: Histone-lysine N-methyltransferase SUV39H2 (410 aa).

Positions Y47–K105 constitute a Chromo domain. Residues F189–G247 enclose the Pre-SET domain. The Zn(2+) site is built by C191, C193, C196, C201, C202, C229, C233, C235, and C239. The region spanning Y250 to Q373 is the SET domain. S-adenosyl-L-methionine-binding positions include C261 to W263, Y304, and N330 to H331. C333 provides a ligand contact to Zn(2+). S381, S384, and S388 each carry phosphoserine. One can recognise a Post-SET domain in the interval A394–N410. 3 residues coordinate Zn(2+): C398, C400, and C405.

This sequence belongs to the class V-like SAM-binding methyltransferase superfamily. Histone-lysine methyltransferase family. Suvar3-9 subfamily. Interacts with SMAD5. The large PER complex involved in the histone methylation is composed of at least PER2, CBX3, TRIM28, SUV39H1 and/or SUV39H2; CBX3 mediates the formation of the complex. Post-translationally, ubiquitinated by the DCX(DCAF13) E3 ubiquitin ligase complex, leading to its degradation.

Its subcellular location is the nucleus. The protein resides in the chromosome. The protein localises to the centromere. The catalysed reaction is L-lysyl(9)-[histone H3] + 3 S-adenosyl-L-methionine = N(6),N(6),N(6)-trimethyl-L-lysyl(9)-[histone H3] + 3 S-adenosyl-L-homocysteine + 3 H(+). Its function is as follows. Histone methyltransferase that specifically trimethylates 'Lys-9' of histone H3 using monomethylated H3 'Lys-9' as substrate. H3 'Lys-9' trimethylation represents a specific tag for epigenetic transcriptional repression by recruiting HP1 (CBX1, CBX3 and/or CBX5) proteins to methylated histones. Mainly functions in heterochromatin regions, thereby playing a central role in the establishment of constitutive heterochromatin at pericentric and telomere regions. H3 'Lys-9' trimethylation is also required to direct DNA methylation at pericentric repeats. SUV39H1 is targeted to histone H3 via its interaction with RB1 and is involved in many processes, such as cell cycle regulation, transcriptional repression and regulation of telomere length. May participate in regulation of higher-order chromatin organization during spermatogenesis. Recruited by the large PER complex to the E-box elements of the circadian target genes such as PER2 itself or PER1, contributes to the conversion of local chromatin to a heterochromatin-like repressive state through H3 'Lys-9' trimethylation. This is Histone-lysine N-methyltransferase SUV39H2 (SUV39H2) from Bos taurus (Bovine).